Here is a 222-residue protein sequence, read N- to C-terminus: Pyridoxine/pyridoxamine 5'-phosphate oxidase (222 aa).

Residues 11 to 14 (RVEY) and Lys-79 each bind substrate. FMN-binding positions include 74 to 79 (RTVLCK), 89 to 90 (YT), Lys-96, and Gln-118. Substrate contacts are provided by Tyr-136, Arg-140, and Ser-144. FMN contacts are provided by residues 153–154 (QS) and Trp-199. A substrate-binding site is contributed by 205–207 (RVH). Arg-209 serves as a coordination point for FMN.

It belongs to the pyridoxamine 5'-phosphate oxidase family. Homodimer. The cofactor is FMN.

It catalyses the reaction pyridoxamine 5'-phosphate + O2 + H2O = pyridoxal 5'-phosphate + H2O2 + NH4(+). The enzyme catalyses pyridoxine 5'-phosphate + O2 = pyridoxal 5'-phosphate + H2O2. Its pathway is cofactor metabolism; pyridoxal 5'-phosphate salvage; pyridoxal 5'-phosphate from pyridoxamine 5'-phosphate: step 1/1. The protein operates within cofactor metabolism; pyridoxal 5'-phosphate salvage; pyridoxal 5'-phosphate from pyridoxine 5'-phosphate: step 1/1. Its function is as follows. Catalyzes the oxidation of either pyridoxine 5'-phosphate (PNP) or pyridoxamine 5'-phosphate (PMP) into pyridoxal 5'-phosphate (PLP). The chain is Pyridoxine/pyridoxamine 5'-phosphate oxidase from Mycolicibacterium vanbaalenii (strain DSM 7251 / JCM 13017 / BCRC 16820 / KCTC 9966 / NRRL B-24157 / PYR-1) (Mycobacterium vanbaalenii).